We begin with the raw amino-acid sequence, 132 residues long: Acyl-CoA thioester hydrolase YciA (132 aa).

In terms of domain architecture, HotDog ACOT-type spans 8 to 123 (PQGDLVLRTL…LFKYVAVDPE (116 aa)).

The protein belongs to the acyl coenzyme A hydrolase family.

In terms of biological role, catalyzes the hydrolysis of the thioester bond in palmitoyl-CoA and malonyl-CoA. The protein is Acyl-CoA thioester hydrolase YciA (yciA) of Escherichia coli O6:H1 (strain CFT073 / ATCC 700928 / UPEC).